Consider the following 122-residue polypeptide: NADH-quinone oxidoreductase subunit A (122 aa).

The next 3 membrane-spanning stretches (helical) occupy residues 12-32 (IIIFLIIALGLSCAFVVVNLI), 66-86 (LVAILFIIFDLEIAFLFPWAI), and 91-111 (IGGLGFTSMMIFLFILTVGFI).

The protein belongs to the complex I subunit 3 family. NDH-1 is composed of 14 different subunits. Subunits NuoA, H, J, K, L, M, N constitute the membrane sector of the complex.

Its subcellular location is the cell inner membrane. The catalysed reaction is a quinone + NADH + 5 H(+)(in) = a quinol + NAD(+) + 4 H(+)(out). NDH-1 shuttles electrons from NADH, via FMN and iron-sulfur (Fe-S) centers, to quinones in the respiratory chain. The immediate electron acceptor for the enzyme in this species is believed to be ubiquinone. Couples the redox reaction to proton translocation (for every two electrons transferred, four hydrogen ions are translocated across the cytoplasmic membrane), and thus conserves the redox energy in a proton gradient. This chain is NADH-quinone oxidoreductase subunit A, found in Pelagibacter ubique (strain HTCC1062).